The following is a 791-amino-acid chain: GDH/6PGL endoplasmic bifunctional protein (791 aa).

Residues 1-19 (MWNMLIVAMCLALLGCLQA) form the signal peptide. At Gln20 the chain carries Pyrrolidone carboxylic acid. The interval 20-526 (QELQGHVSII…SGRLFFSQQQ (507 aa)) is hexose-6-phosphate dehydrogenase. Residues 32–39 (GATGDLAK) and Tyr149 each bind NADP(+). A glycan (N-linked (GlcNAc...) asparagine) is linked at Asn157. Lys174 contributes to the NADP(+) binding site. Residues Lys174, 204 to 208 (HYLGK), Glu243, and Asp262 each bind D-glucose 6-phosphate. An N6-succinyllysine modification is found at Lys208. The active-site Proton acceptor is His267. The N-linked (GlcNAc...) asparagine glycan is linked to Asn282. D-glucose 6-phosphate contacts are provided by Lys360 and Arg365. Arg370 contacts NADP(+). Residues 527 to 540 (PEQLVPGPGPAPMP) form a linker region. Residues 541–791 (SDFQVLRAKY…WYMDYDAFLG (251 aa)) are 6-phosphogluconolactonase. Trp617 serves as a coordination point for NADP(+). An N-linked (GlcNAc...) asparagine glycan is attached at Asn683.

The protein in the N-terminal section; belongs to the glucose-6-phosphate dehydrogenase family. It in the C-terminal section; belongs to the glucosamine/galactosamine-6-phosphate isomerase family. 6-phosphogluconolactonase subfamily. Homodimer. In terms of tissue distribution, present in most tissues examined, strongest in liver.

The protein resides in the endoplasmic reticulum lumen. It carries out the reaction D-glucose 6-phosphate + NADP(+) = 6-phospho-D-glucono-1,5-lactone + NADPH + H(+). The catalysed reaction is D-glucose 6-phosphate + NAD(+) = 6-phospho-D-glucono-1,5-lactone + NADH + H(+). The enzyme catalyses 6-phospho-D-glucono-1,5-lactone + H2O = 6-phospho-D-gluconate + H(+). It catalyses the reaction 2-deoxy-D-glucose 6-phosphate + NAD(+) = 2-deoxy-6-phospho-D-glucono-1,5-lactone + NADH + H(+). It carries out the reaction 2-deoxy-D-glucose 6-phosphate + NADP(+) = 2-deoxy-6-phospho-D-glucono-1,5-lactone + NADPH + H(+). The catalysed reaction is D-galactose 6-phosphate + NADP(+) = 6-phospho-D-galactono-1,5-lactone + NADPH + H(+). The enzyme catalyses D-galactose 6-phosphate + NAD(+) = 6-phospho-D-galactono-1,5-lactone + NADH + H(+). It catalyses the reaction D-glucosamine 6-phosphate + NADP(+) = 2-amino-2-deoxy-6-phospho-D-glucono-1,5-lactone + NADPH + 2 H(+). It carries out the reaction D-glucose + NAD(+) = D-glucono-1,5-lactone + NADH + H(+). The catalysed reaction is D-glucose + NADP(+) = D-glucono-1,5-lactone + NADPH + H(+). The enzyme catalyses D-glucose 6-sulfate + NADP(+) = 6-sulfo-D-glucono-1,5-lactone + NADPH + H(+). It participates in carbohydrate degradation; pentose phosphate pathway; D-ribulose 5-phosphate from D-glucose 6-phosphate (oxidative stage): step 1/3. Its pathway is carbohydrate degradation; pentose phosphate pathway; D-ribulose 5-phosphate from D-glucose 6-phosphate (oxidative stage): step 2/3. It functions in the pathway carbohydrate degradation; pentose phosphate pathway; D-ribulose 5-phosphate from D-glucose 6-phosphate (oxidative stage). In terms of biological role, bifunctional enzyme localized in the lumen of the endoplasmic reticulum that catalyzes the first two steps of the oxidative branch of the pentose phosphate pathway/shunt, an alternative to glycolysis and a major source of reducing power and metabolic intermediates for biosynthetic processes. Has a hexose-6-phosphate dehydrogenase activity, with broad substrate specificity compared to glucose-6-phosphate 1-dehydrogenase/G6PD, and catalyzes the first step of the pentose phosphate pathway. In addition, acts as a 6-phosphogluconolactonase and catalyzes the second step of the pentose phosphate pathway. May have a dehydrogenase activity for alternative substrates including glucosamine 6-phosphate and glucose 6-sulfate. The main function of this enzyme is to provide reducing equivalents such as NADPH to maintain the adequate levels of reductive cofactors in the oxidizing environment of the endoplasmic reticulum. By producing NADPH that is needed by reductases of the lumen of the endoplasmic reticulum like corticosteroid 11-beta-dehydrogenase isozyme 1/HSD11B1, indirectly regulates their activity. In Homo sapiens (Human), this protein is GDH/6PGL endoplasmic bifunctional protein.